A 340-amino-acid chain; its full sequence is Ribonucleoside-diphosphate reductase small subunit (340 aa).

D94, E124, and H127 together coordinate Fe cation. Residue Y131 is part of the active site. The helical transmembrane segment at 180–200 threads the bilayer; sequence FILMILIEGIFFAASFAAIAY. Fe cation is bound by residues E187, E221, and H224.

This sequence belongs to the ribonucleoside diphosphate reductase small chain family. In terms of assembly, heterotetramer composed of a homodimer of the large subunit (R1) and a homodimer of the small subunit (R2). Larger multisubunit protein complex are also active, composed of (R1)n(R2)n. The cofactor is Fe cation.

It localises to the host membrane. It carries out the reaction a 2'-deoxyribonucleoside 5'-diphosphate + [thioredoxin]-disulfide + H2O = a ribonucleoside 5'-diphosphate + [thioredoxin]-dithiol. In terms of biological role, ribonucleoside-diphosphate reductase holoenzyme provides the precursors necessary for viral DNA synthesis. Allows virus growth in non-dividing cells, as well as reactivation from latency in infected hosts. Catalyzes the biosynthesis of deoxyribonucleotides from the corresponding ribonucleotides. In Human herpesvirus 1 (strain KOS) (HHV-1), this protein is Ribonucleoside-diphosphate reductase small subunit.